The primary structure comprises 247 residues: MGRGRVQLKRIENKISRQVTFSKRRSGLLKKAHEISVLCDAEVALIVFSTKGKLFEYSSDSSMERILERYERYSLSERQLLSTDPDPQGNWSMDYPKLTARIEVLQRNLRHFVGEDLDPLSLRELQNLEQQLDTALKRIRTRKNQLMHESISELQKKEKSLVEQNNALAKKVKEKEKVEQNNRAQWEQQNNIGQNSSAYVVPPPPLQLPSLTIGGSFVGRAVEEDGAEARPSPNTLMPPWMLRHVNE.

Residues Met1 to Ser61 form the MADS-box domain. Residues Gln88 to Val178 enclose the K-box domain. A disordered region spans residues Glu224 to Glu247.

Expressed in tendrils and flowers.

Its subcellular location is the nucleus. In terms of biological role, probable transcription factor involved in flower development. This chain is Agamous-like MADS-box protein FUL-L, found in Vitis vinifera (Grape).